Consider the following 307-residue polypeptide: Pseudouridine-5'-phosphate glycosidase (307 aa).

Residue Glu28 is the Proton donor of the active site. Substrate contacts are provided by Lys89 and Val109. Mn(2+) is bound at residue Asp141. 143–145 contributes to the substrate binding site; that stretch reads SAD. Lys162 (nucleophile) is an active-site residue.

The protein belongs to the pseudouridine-5'-phosphate glycosidase family. As to quaternary structure, homotrimer. Mn(2+) is required as a cofactor.

It carries out the reaction D-ribose 5-phosphate + uracil = psi-UMP + H2O. Its function is as follows. Catalyzes the reversible cleavage of pseudouridine 5'-phosphate (PsiMP) to ribose 5-phosphate and uracil. Functions biologically in the cleavage direction, as part of a pseudouridine degradation pathway. This is Pseudouridine-5'-phosphate glycosidase from Alkaliphilus metalliredigens (strain QYMF).